The sequence spans 597 residues: Nucleolar protein 58 (597 aa).

Residues 285–410 (IAPNMTELVG…LENNLRQLEG (126 aa)) form the Nop domain. Residues 452-597 (AEAPKKPLIQ…KKKKKKSSKE (146 aa)) are disordered. The segment covering 482–499 (KSKKDKKEKKEKKDKKAK) has biased composition (basic residues). The segment covering 532 to 551 (IKEDGTLEILSKKDFKGKDA) has biased composition (basic and acidic residues). The span at 552 to 561 (EAEEEAEEEE) shows a compositional bias: acidic residues. The span at 588 to 597 (KKKKKKSSKE) shows a compositional bias: basic residues.

The protein belongs to the NOP5/NOP56 family.

The protein localises to the nucleus. It is found in the nucleolus. In terms of biological role, required for pre-18S rRNA processing. May bind microtubules. In Neurospora crassa (strain ATCC 24698 / 74-OR23-1A / CBS 708.71 / DSM 1257 / FGSC 987), this protein is Nucleolar protein 58 (nop-58).